The primary structure comprises 511 residues: ATP synthase subunit alpha 2 (511 aa).

Glycine 173–serine 180 provides a ligand contact to ATP.

The protein belongs to the ATPase alpha/beta chains family. In terms of assembly, F-type ATPases have 2 components, CF(1) - the catalytic core - and CF(0) - the membrane proton channel. CF(1) has five subunits: alpha(3), beta(3), gamma(1), delta(1), epsilon(1). CF(0) has three main subunits: a(1), b(2) and c(9-12). The alpha and beta chains form an alternating ring which encloses part of the gamma chain. CF(1) is attached to CF(0) by a central stalk formed by the gamma and epsilon chains, while a peripheral stalk is formed by the delta and b chains.

It is found in the cell inner membrane. It carries out the reaction ATP + H2O + 4 H(+)(in) = ADP + phosphate + 5 H(+)(out). Functionally, produces ATP from ADP in the presence of a proton gradient across the membrane. The alpha chain is a regulatory subunit. In Nitrosospira multiformis (strain ATCC 25196 / NCIMB 11849 / C 71), this protein is ATP synthase subunit alpha 2.